The primary structure comprises 505 residues: AMP phosphorylase 2 (505 aa).

AMP is bound by residues Gly169, 195–200 (SRAITT), Thr204, Ser265, and Lys289.

This sequence belongs to the thymidine/pyrimidine-nucleoside phosphorylase family. Type 2 subfamily.

The enzyme catalyses AMP + phosphate = alpha-D-ribose 1,5-bisphosphate + adenine. It catalyses the reaction CMP + phosphate = cytosine + alpha-D-ribose 1,5-bisphosphate. It carries out the reaction UMP + phosphate = alpha-D-ribose 1,5-bisphosphate + uracil. In terms of biological role, catalyzes the conversion of AMP and phosphate to adenine and ribose 1,5-bisphosphate (R15P). Exhibits phosphorylase activity toward CMP and UMP in addition to AMP. Functions in an archaeal AMP degradation pathway, together with R15P isomerase and RubisCO. The chain is AMP phosphorylase 2 from Archaeoglobus fulgidus (strain ATCC 49558 / DSM 4304 / JCM 9628 / NBRC 100126 / VC-16).